The primary structure comprises 727 residues: MPSPSYNRHIIIASCFCCLLIFSSAARVPKASKKHLARVKQLLNDEAERHNTLIQSDSVTVFDDIQRNPNTGVHHDELAVNNADEYFQGDVDLSEQQVKIIEDQFTQGKREKRKIGRNPLYKKWDTRGPISFDYAESIPFQTRQKIRSAMLLWQQHTCLRFEEGGPNVDRLEFFDGGGCSSFVGRVGGTQGISISTPGCDVVGIISHEIGHALGIFHEQARPDQERHIAINYNNIPLSRWNNFQAVGENHAETYNLPYDTGSVMHYGPYGFASDPYTPTIRTLERVQQSTIGQRAGPSFLDYQAINMAYGCTESCADLPCLRNGYTHPNNCSMCACPEGLSGRYCEQVYPSNAQCGGVIFATKEVKYITSPNYPDKFPIDTECNWIIAAPIEGRVFMEFEGDFDFLCEDTCDKAYVEVKYHSDKRLTGARYCCSLLPKNRFISFKNEMIIIMRGYRSSGAGFKAKFWSNLGEPEGVSTPLPPTTAPLPEISETTQKPEPTTVQSTTTYTTAIPRRTAKKQFFTRKPITIPLTPLTSSSTTTESTTVSSTTQSTTWLPTEPSFATGETEITTASPTITLFPSLSTILPPINSLAGVLPSTQAPDIINSVLECGCGAWSEWQGECSQQCGGCGHRLRKRECKKEACRKEEKRPCNFSACPDGTNFLINNAEFHILWRGCCVGLFRSGDQCSALETESNPFFKIINSLLNIQDAKNNDTLIAKRMMRGEH.

Positions 1 to 25 (MPSPSYNRHIIIASCFCCLLIFSSA) are cleaved as a signal peptide. The propeptide occupies 26–114 (ARVPKASKKH…FTQGKREKRK (89 aa)). One can recognise a Peptidase M12A domain in the interval 113–312 (RKIGRNPLYK…QAINMAYGCT (200 aa)). Cystine bridges form between C158–C311 and C179–C199. Residue H207 coordinates Zn(2+). E208 is an active-site residue. Residues H211 and H217 each contribute to the Zn(2+) site. In terms of domain architecture, EGF-like spans 306–345 (NMAYGCTESCADLPCLRNGYTHPNNCSMCACPEGLSGRYC). An N-linked (GlcNAc...) asparagine glycan is attached at N330. Positions 353–469 (AQCGGVIFAT…AGFKAKFWSN (117 aa)) constitute a CUB domain. Disulfide bonds link C355–C383 and C411–C432. 2 disordered regions span residues 473 to 506 (PEGVSTPLPPTTAPLPEISETTQKPEPTTVQSTT) and 532 to 561 (TPLTSSSTTTESTTVSSTTQSTTWLPTEPS). A compositionally biased stretch (low complexity) spans 535–554 (TSSSTTTESTTVSSTTQSTT). The region spanning 610-658 (ECGCGAWSEWQGECSQQCGGCGHRLRKRECKKEACRKEEKRPCNFSACP) is the TSP type-1 domain. Intrachain disulfides connect C611/C644, C623/C652, C627/C657, and C639/C644. 2 N-linked (GlcNAc...) asparagine glycosylation sites follow: N653 and N714.

The cofactor is Zn(2+). In terms of tissue distribution, expressed in the epidermis, the excretory canal cell, duct cell, pore cell, and excretory gland cell. Expressed in an oscillating pattern in epithelial cells with increased expression during the lethargus phase which occurs during molting between larval and adult stages. Not expressed in seam cells or in the RIS neuron.

It localises to the secreted. Metalloprotease. As part of the innate immune response to molting and injury to the adult epidermis, positively regulates the activity of the transcription factor sta-2 to promote the expression of epidermal antimicrobial peptides such as nlp-29. Through regulating the expression of epidermal antimicrobial peptides such as nlp-29, modulates sleep duration and locomotion quiescence during the sleep-like state called lethargus which occurs during molting between larval and adult stages. This may occur through the sleep-active RIS neuron. In Caenorhabditis elegans, this protein is Zinc metalloproteinase nas-38.